A 285-amino-acid chain; its full sequence is Polyamine aminopropyltransferase (285 aa).

The 237-residue stretch at 5 to 241 folds into the PABS domain; sequence DNWYIEHFQP…GWWSVTMASK (237 aa). Position 35 (Q35) interacts with S-methyl-5'-thioadenosine. Positions 66 and 90 each coordinate spermidine. S-methyl-5'-thioadenosine is bound by residues D110 and 141 to 142; that span reads DG. Catalysis depends on D160, which acts as the Proton acceptor. A spermidine-binding site is contributed by 160-163; that stretch reads DSTD. P167 is a binding site for S-methyl-5'-thioadenosine.

This sequence belongs to the spermidine/spermine synthase family. As to quaternary structure, homodimer or homotetramer.

It is found in the cytoplasm. The catalysed reaction is S-adenosyl 3-(methylsulfanyl)propylamine + putrescine = S-methyl-5'-thioadenosine + spermidine + H(+). It participates in amine and polyamine biosynthesis; spermidine biosynthesis; spermidine from putrescine: step 1/1. In terms of biological role, catalyzes the irreversible transfer of a propylamine group from the amino donor S-adenosylmethioninamine (decarboxy-AdoMet) to putrescine (1,4-diaminobutane) to yield spermidine. This Xanthomonas euvesicatoria pv. vesicatoria (strain 85-10) (Xanthomonas campestris pv. vesicatoria) protein is Polyamine aminopropyltransferase.